We begin with the raw amino-acid sequence, 51 residues long: Large ribosomal subunit protein eL39 (51 aa).

Belongs to the eukaryotic ribosomal protein eL39 family.

The protein is Large ribosomal subunit protein eL39 of Staphylothermus marinus (strain ATCC 43588 / DSM 3639 / JCM 9404 / F1).